The following is a 292-amino-acid chain: Lipoyl synthase (292 aa).

The [4Fe-4S] cluster site is built by cysteine 34, cysteine 39, cysteine 45, cysteine 60, cysteine 64, cysteine 67, and serine 273. Positions tryptophan 46–leucine 262 constitute a Radical SAM core domain.

It belongs to the radical SAM superfamily. Lipoyl synthase family. The cofactor is [4Fe-4S] cluster.

The protein resides in the cytoplasm. It carries out the reaction [[Fe-S] cluster scaffold protein carrying a second [4Fe-4S](2+) cluster] + N(6)-octanoyl-L-lysyl-[protein] + 2 oxidized [2Fe-2S]-[ferredoxin] + 2 S-adenosyl-L-methionine + 4 H(+) = [[Fe-S] cluster scaffold protein] + N(6)-[(R)-dihydrolipoyl]-L-lysyl-[protein] + 4 Fe(3+) + 2 hydrogen sulfide + 2 5'-deoxyadenosine + 2 L-methionine + 2 reduced [2Fe-2S]-[ferredoxin]. It functions in the pathway protein modification; protein lipoylation via endogenous pathway; protein N(6)-(lipoyl)lysine from octanoyl-[acyl-carrier-protein]: step 2/2. Functionally, catalyzes the radical-mediated insertion of two sulfur atoms into the C-6 and C-8 positions of the octanoyl moiety bound to the lipoyl domains of lipoate-dependent enzymes, thereby converting the octanoylated domains into lipoylated derivatives. This is Lipoyl synthase from Ehrlichia ruminantium (strain Welgevonden).